A 308-amino-acid chain; its full sequence is uncharacterized protein (308 aa).

The ABC transporter domain maps to 5–236 (LELQQLKKTY…LKSETFILDL (232 aa)). 38-45 (GPNGAGKS) provides a ligand contact to ATP.

It belongs to the ABC transporter superfamily.

This is an uncharacterized protein from Escherichia coli (strain K12).